The primary structure comprises 262 residues: Indole-3-glycerol phosphate synthase (262 aa).

This sequence belongs to the TrpC family.

It catalyses the reaction 1-(2-carboxyphenylamino)-1-deoxy-D-ribulose 5-phosphate + H(+) = (1S,2R)-1-C-(indol-3-yl)glycerol 3-phosphate + CO2 + H2O. It functions in the pathway amino-acid biosynthesis; L-tryptophan biosynthesis; L-tryptophan from chorismate: step 4/5. This chain is Indole-3-glycerol phosphate synthase, found in Bordetella avium (strain 197N).